A 420-amino-acid chain; its full sequence is D-tagatose-1,6-bisphosphate aldolase subunit GatZ (420 aa).

This sequence belongs to the GatZ/KbaZ family. GatZ subfamily. As to quaternary structure, forms a complex with GatY.

It functions in the pathway carbohydrate metabolism; D-tagatose 6-phosphate degradation; D-glyceraldehyde 3-phosphate and glycerone phosphate from D-tagatose 6-phosphate: step 2/2. Component of the tagatose-1,6-bisphosphate aldolase GatYZ that is required for full activity and stability of the Y subunit. Could have a chaperone-like function for the proper and stable folding of GatY. When expressed alone, GatZ does not show any aldolase activity. Is involved in the catabolism of galactitol. The polypeptide is D-tagatose-1,6-bisphosphate aldolase subunit GatZ (Shigella flexneri serotype 5b (strain 8401)).